The sequence spans 374 residues: Erythronate-4-phosphate dehydrogenase (374 aa).

Substrate is bound by residues serine 45 and threonine 67. Aspartate 147 lines the NAD(+) pocket. Arginine 208 is a catalytic residue. Aspartate 232 serves as a coordination point for NAD(+). Glutamate 237 is an active-site residue. The Proton donor role is filled by histidine 254. An NAD(+)-binding site is contributed by glycine 257.

It belongs to the D-isomer specific 2-hydroxyacid dehydrogenase family. PdxB subfamily. In terms of assembly, homodimer.

The protein resides in the cytoplasm. The enzyme catalyses 4-phospho-D-erythronate + NAD(+) = (R)-3-hydroxy-2-oxo-4-phosphooxybutanoate + NADH + H(+). It participates in cofactor biosynthesis; pyridoxine 5'-phosphate biosynthesis; pyridoxine 5'-phosphate from D-erythrose 4-phosphate: step 2/5. Functionally, catalyzes the oxidation of erythronate-4-phosphate to 3-hydroxy-2-oxo-4-phosphonooxybutanoate. The chain is Erythronate-4-phosphate dehydrogenase from Pseudoalteromonas atlantica (strain T6c / ATCC BAA-1087).